The chain runs to 157 residues: Probable Brix domain-containing ribosomal biogenesis protein (157 aa).

The 157-residue stretch at 1–157 (MLVTSSRKPS…KLNLRGFKKY (157 aa)) folds into the Brix domain.

Probably involved in the biogenesis of the ribosome. The chain is Probable Brix domain-containing ribosomal biogenesis protein from Methanosarcina barkeri (strain Fusaro / DSM 804).